The primary structure comprises 149 residues: Deoxyuridine 5'-triphosphate nucleotidohydrolase (149 aa).

Substrate-binding positions include 68 to 70 (RSG), asparagine 81, 85 to 87 (LID), and methionine 95.

The protein belongs to the dUTPase family. Mg(2+) is required as a cofactor.

The catalysed reaction is dUTP + H2O = dUMP + diphosphate + H(+). It participates in pyrimidine metabolism; dUMP biosynthesis; dUMP from dCTP (dUTP route): step 2/2. Its function is as follows. This enzyme is involved in nucleotide metabolism: it produces dUMP, the immediate precursor of thymidine nucleotides and it decreases the intracellular concentration of dUTP so that uracil cannot be incorporated into DNA. This chain is Deoxyuridine 5'-triphosphate nucleotidohydrolase, found in Polynucleobacter necessarius subsp. necessarius (strain STIR1).